The following is a 648-amino-acid chain: Golgin subfamily A member 8G (648 aa).

A compositionally biased stretch (pro residues) spans Met-1–Pro-11. Disordered regions lie at residues Met-1–Leu-84 and Asn-119–Ala-139. Over residues Thr-50–Gly-62 the composition is skewed to polar residues. Coiled coils occupy residues Val-105 to Asp-160, Leu-223 to Glu-275, and Glu-318 to Gln-424. Residues Gln-121–Ala-139 are compositionally biased toward basic and acidic residues. Disordered regions lie at residues Leu-356 to Arg-376, Ala-434 to Gln-461, Pro-508 to Ala-549, and Pro-600 to Gln-624. Residues Gly-441–Pro-453 show a composition bias toward basic and acidic residues. Residues Pro-521 to Gly-534 are compositionally biased toward gly residues.

This sequence belongs to the GOLGA8 family.

The chain is Golgin subfamily A member 8G from Homo sapiens (Human).